We begin with the raw amino-acid sequence, 295 residues long: F-box only protein 6 (295 aa).

In terms of domain architecture, F-box spans 1–48 (MVHINELPENILLELFIHIPAPQLLRNCRLVCRLWRDLIDVVSLWKRK). Residues 69-250 (FYILCSLQRN…VTNSSIIISH (182 aa)) form the FBA domain. Phosphoserine occurs at positions 249 and 276. Threonine 280 is modified (phosphothreonine).

As to quaternary structure, interacts with CHEK1 and CUL1. Part of a SCF (SKP1-cullin-F-box) protein ligase complex. Interacts with VCP. As to expression, present in liver and kidney (at protein level). Widely expressed.

It localises to the cytoplasm. The protein operates within protein modification; protein ubiquitination. Functionally, substrate-recognition component of some SCF (SKP1-CUL1-F-box protein)-type E3 ubiquitin ligase complexes. Involved in DNA damage response by specifically recognizing activated CHEK1 (phosphorylated on 'Ser-345'), promoting its ubiquitination and degradation. Ubiquitination of CHEK1 is required to ensure that activated CHEK1 does not accumulate as cells progress through S phase, or when replication forks encounter transient impediments during normal DNA replication. Involved in endoplasmic reticulum-associated degradation pathway (ERAD) for misfolded lumenal proteins by recognizing and binding sugar chains on unfolded glycoproteins that are retrotranslocated into the cytosol and promoting their ubiquitination and subsequent degradation. Able to recognize and bind denatured glycoproteins, which are modified with not only high-mannose but also complex-type oligosaccharides. Also recognizes sulfated glycans. The protein is F-box only protein 6 (Fbxo6) of Mus musculus (Mouse).